We begin with the raw amino-acid sequence, 156 residues long: uncharacterized protein (156 aa).

This is an uncharacterized protein from Escherichia coli (strain K12).